The following is a 346-amino-acid chain: Sensor histidine kinase GraS (346 aa).

Helical transmembrane passes span 15–35 (INWILWILFLNIILLGVAYID) and 43–63 (VFYIVILNVGLSILFLLFTFV). One can recognise a Histidine kinase domain in the interval 126–332 (EFVHDIKTPV…TFYFIFPQQN (207 aa)). The residue at position 129 (His129) is a Phosphohistidine; by autocatalysis.

In terms of processing, autophosphorylated.

The protein localises to the cell membrane. It carries out the reaction ATP + protein L-histidine = ADP + protein N-phospho-L-histidine.. Functionally, member of the two-component regulatory system GraR/GraS involved in resistance against cationic antimicrobial peptides (CAMPs). GraS probably functions as a sensor protein kinase which is autophosphorylated at a histidine residue and transfers its phosphate group to GraR. The protein is Sensor histidine kinase GraS (graS) of Staphylococcus epidermidis (strain ATCC 35984 / DSM 28319 / BCRC 17069 / CCUG 31568 / BM 3577 / RP62A).